Here is a 28-residue protein sequence, read N- to C-terminus: Mast cell degranulating peptide (28 aa).

2 disulfide bridges follow: cysteine 2–cysteine 18 and cysteine 4–cysteine 22.

In terms of tissue distribution, expressed by the venom gland.

It localises to the secreted. In terms of biological role, mast cell degranulating peptide. This is Mast cell degranulating peptide from Bombus pensylvanicus (American bumblebee).